A 210-amino-acid polypeptide reads, in one-letter code: T-cell surface glycoprotein CD8 beta chain (210 aa).

The N-terminal stretch at 1-21 (MQPGLWLLLATQLAALRGSSV) is a signal peptide. One can recognise an Ig-like V-type domain in the interval 22 to 132 (LQQAPGSVMV…ELTFGKGTRL (111 aa)). Over 22-170 (LQQAPGSVMV…VTQKGPSCGL (149 aa)) the chain is Extracellular. Cysteines 41 and 116 form a disulfide. N-linked (GlcNAc...) asparagine glycosylation occurs at Asn-102. The segment at 139-161 (PTNSQPTKKPTPRKKMCRPPSPV) is disordered. A helical transmembrane segment spans residues 171-191 (LTLGLLVAGVLVLLVSLGVAI). Residues 192 to 210 (HLYRLKRRARLRLLKQFYK) are Cytoplasmic-facing.

As to quaternary structure, forms disulfide-linked heterodimers with CD8A at the cell surface. Interacts with CD3D; this interaction couples TCR-CD3 with CD8. Interacts with LCK. Post-translationally, phosphorylated as a consequence of T-cell activation. In terms of processing, palmitoylated at the cytoplasmic tail and thereby targets the heterodimer CD8A/CD8B to lipid rafts unlike CD8A homodimers.

The protein localises to the cell membrane. In terms of biological role, integral membrane glycoprotein that plays an essential role in the immune response and serves multiple functions in responses against both external and internal offenses. In T-cells, functions primarily as a coreceptor for MHC class I molecule:peptide complex. The antigens presented by class I peptides are derived from cytosolic proteins while class II derived from extracellular proteins. Interacts simultaneously with the T-cell receptor (TCR) and the MHC class I proteins presented by antigen presenting cells (APCs). In turn, recruits the Src kinase LCK to the vicinity of the TCR-CD3 complex. A palmitoylation site in the cytoplasmic tail of CD8B chain contributes to partitioning of CD8 into the plasma membrane lipid rafts where signaling proteins are enriched. Once LCK recruited, it initiates different intracellular signaling pathways by phosphorylating various substrates ultimately leading to lymphokine production, motility, adhesion and activation of cytotoxic T-lymphocytes (CTLs). Additionally, plays a critical role in thymic selection of CD8+ T-cells. The protein is T-cell surface glycoprotein CD8 beta chain (CD8B) of Felis catus (Cat).